The sequence spans 817 residues: Leucine--tRNA ligase (817 aa).

Residues 40–50 (PYPSGKLHMGH) carry the 'HIGH' region motif. Positions 578–582 (KMSKS) match the 'KMSKS' region motif. Residue lysine 581 coordinates ATP.

This sequence belongs to the class-I aminoacyl-tRNA synthetase family.

Its subcellular location is the cytoplasm. It carries out the reaction tRNA(Leu) + L-leucine + ATP = L-leucyl-tRNA(Leu) + AMP + diphosphate. This chain is Leucine--tRNA ligase, found in Caldicellulosiruptor saccharolyticus (strain ATCC 43494 / DSM 8903 / Tp8T 6331).